The chain runs to 386 residues: MSKNYLFTSESVSEGHPDKLADQISDAILDEILKQDKNARVACETLVKTGMALVAGEITTSAWVDIEELVRNVITETGYDNASKGIDGRTCSVINAIGKQSRDITQGVDRGSLEDLGAGDQGLMFGFATNETPTLMPSAIYYSHLLMRKQAELRKSGKLAWLRPDAKAQVTLAYENDKPKFIDTIVLSTQHNESISQKELHDAVIEEIVKKVIPNELITKDTKYHINPTGVFLIGGPQGDCGLTGRKIIVDTYGGAAHHGGGAFSGKDPSKVDRSGAYMGRYIAKNIVAAGLADKCEVQVAYAIGVAKPVSLMVNTFGTGKITDNQIEKLVAEVFDLRVGKIIENLDLLRPIYRKTSNYGHFGRELPEFTWEKIDKADILKSAARI.

His-16 contributes to the ATP binding site. Asp-18 is a Mg(2+) binding site. Glu-44 serves as a coordination point for K(+). L-methionine-binding residues include Glu-57 and Gln-100. Residues 100–110 (QSRDITQGVDR) form a flexible loop region. ATP-binding positions include 165 to 167 (DAK), Asp-240, 246 to 247 (RK), Ala-263, and Lys-267. An L-methionine-binding site is contributed by Asp-240. Position 271 (Lys-271) interacts with L-methionine.

Belongs to the AdoMet synthase family. Homotetramer; dimer of dimers. Mg(2+) serves as cofactor. Requires K(+) as cofactor.

The protein localises to the cytoplasm. It carries out the reaction L-methionine + ATP + H2O = S-adenosyl-L-methionine + phosphate + diphosphate. It participates in amino-acid biosynthesis; S-adenosyl-L-methionine biosynthesis; S-adenosyl-L-methionine from L-methionine: step 1/1. In terms of biological role, catalyzes the formation of S-adenosylmethionine (AdoMet) from methionine and ATP. The overall synthetic reaction is composed of two sequential steps, AdoMet formation and the subsequent tripolyphosphate hydrolysis which occurs prior to release of AdoMet from the enzyme. The protein is S-adenosylmethionine synthase of Francisella tularensis subsp. tularensis (strain FSC 198).